The following is a 311-amino-acid chain: Aspartate carbamoyltransferase catalytic subunit (311 aa).

Carbamoyl phosphate is bound by residues Arg-58 and Thr-59. Lys-86 contributes to the L-aspartate binding site. Positions 108, 136, and 139 each coordinate carbamoyl phosphate. L-aspartate is bound by residues Arg-169 and Arg-224. Residues Gly-265 and Pro-266 each contribute to the carbamoyl phosphate site.

Belongs to the aspartate/ornithine carbamoyltransferase superfamily. ATCase family. As to quaternary structure, heterododecamer (2C3:3R2) of six catalytic PyrB chains organized as two trimers (C3), and six regulatory PyrI chains organized as three dimers (R2).

The enzyme catalyses carbamoyl phosphate + L-aspartate = N-carbamoyl-L-aspartate + phosphate + H(+). It functions in the pathway pyrimidine metabolism; UMP biosynthesis via de novo pathway; (S)-dihydroorotate from bicarbonate: step 2/3. Its function is as follows. Catalyzes the condensation of carbamoyl phosphate and aspartate to form carbamoyl aspartate and inorganic phosphate, the committed step in the de novo pyrimidine nucleotide biosynthesis pathway. The sequence is that of Aspartate carbamoyltransferase catalytic subunit from Geotalea daltonii (strain DSM 22248 / JCM 15807 / FRC-32) (Geobacter daltonii).